Reading from the N-terminus, the 393-residue chain is Acetylornithine aminotransferase 1 (393 aa).

A N(2)-acetyl-L-ornithine-binding site is contributed by arginine 131. Pyridoxal 5'-phosphate is bound at residue 215–218 (DEVQ). N6-(pyridoxal phosphate)lysine is present on lysine 244. Threonine 272 is a binding site for N(2)-acetyl-L-ornithine. Threonine 273 lines the pyridoxal 5'-phosphate pocket.

Belongs to the class-III pyridoxal-phosphate-dependent aminotransferase family. ArgD subfamily. Homodimer. The cofactor is pyridoxal 5'-phosphate.

The protein localises to the cytoplasm. The catalysed reaction is N(2)-acetyl-L-ornithine + 2-oxoglutarate = N-acetyl-L-glutamate 5-semialdehyde + L-glutamate. It participates in amino-acid biosynthesis; L-arginine biosynthesis; N(2)-acetyl-L-ornithine from L-glutamate: step 4/4. This chain is Acetylornithine aminotransferase 1, found in Bordetella parapertussis (strain 12822 / ATCC BAA-587 / NCTC 13253).